A 466-amino-acid chain; its full sequence is Glutamate decarboxylase (466 aa).

Lysine 277 carries the post-translational modification N6-(pyridoxal phosphate)lysine.

This sequence belongs to the group II decarboxylase family. It depends on pyridoxal 5'-phosphate as a cofactor.

The catalysed reaction is L-glutamate + H(+) = 4-aminobutanoate + CO2. Its function is as follows. Converts internalized glutamate to GABA and increases the internal pH. Involved in glutamate-dependent acid resistance. This is Glutamate decarboxylase (gadB) from Lactococcus lactis subsp. lactis (strain IL1403) (Streptococcus lactis).